The primary structure comprises 225 residues: NAD(P)H-quinone oxidoreductase subunit K, chloroplastic (225 aa).

Positions 43, 44, 108, and 139 each coordinate [4Fe-4S] cluster.

Belongs to the complex I 20 kDa subunit family. NDH is composed of at least 16 different subunits, 5 of which are encoded in the nucleus. The cofactor is [4Fe-4S] cluster.

It is found in the plastid. It localises to the chloroplast thylakoid membrane. The catalysed reaction is a plastoquinone + NADH + (n+1) H(+)(in) = a plastoquinol + NAD(+) + n H(+)(out). The enzyme catalyses a plastoquinone + NADPH + (n+1) H(+)(in) = a plastoquinol + NADP(+) + n H(+)(out). Functionally, NDH shuttles electrons from NAD(P)H:plastoquinone, via FMN and iron-sulfur (Fe-S) centers, to quinones in the photosynthetic chain and possibly in a chloroplast respiratory chain. The immediate electron acceptor for the enzyme in this species is believed to be plastoquinone. Couples the redox reaction to proton translocation, and thus conserves the redox energy in a proton gradient. The chain is NAD(P)H-quinone oxidoreductase subunit K, chloroplastic from Illicium oligandrum (Star anise).